Reading from the N-terminus, the 198-residue chain is Dynein light chain Tctex-type protein 2 (198 aa).

The interval 1–34 (MEKRGRGVKSSPIQTPNQTPQQAPVTPRKERRPS) is disordered. The segment covering 11–24 (SPIQTPNQTPQQAP) has biased composition (polar residues).

Belongs to the dynein light chain Tctex-type family. In terms of assembly, interacts with CCDC159. Interacts with CSNK2B. Expressed predominantly in testis. Also expressed in brain, lung and trachea.

It localises to the cytoplasm. Its subcellular location is the cytoskeleton. The protein localises to the cytoplasmic granule. It is found in the membrane. Functionally, may be an accessory component of axonemal dynein and cytoplasmic dynein 1. Candidate for involvement in male sterility. In Homo sapiens (Human), this protein is Dynein light chain Tctex-type protein 2.